The following is a 347-amino-acid chain: Lipoyl synthase (347 aa).

Residues cysteine 55, cysteine 60, cysteine 66, cysteine 81, cysteine 85, cysteine 88, and serine 292 each contribute to the [4Fe-4S] cluster site. The 215-residue stretch at 67–281 (WEDREATFLI…RDYGHDIGFA (215 aa)) folds into the Radical SAM core domain.

Belongs to the radical SAM superfamily. Lipoyl synthase family. It depends on [4Fe-4S] cluster as a cofactor.

It localises to the cytoplasm. It catalyses the reaction [[Fe-S] cluster scaffold protein carrying a second [4Fe-4S](2+) cluster] + N(6)-octanoyl-L-lysyl-[protein] + 2 oxidized [2Fe-2S]-[ferredoxin] + 2 S-adenosyl-L-methionine + 4 H(+) = [[Fe-S] cluster scaffold protein] + N(6)-[(R)-dihydrolipoyl]-L-lysyl-[protein] + 4 Fe(3+) + 2 hydrogen sulfide + 2 5'-deoxyadenosine + 2 L-methionine + 2 reduced [2Fe-2S]-[ferredoxin]. The protein operates within protein modification; protein lipoylation via endogenous pathway; protein N(6)-(lipoyl)lysine from octanoyl-[acyl-carrier-protein]: step 2/2. Functionally, catalyzes the radical-mediated insertion of two sulfur atoms into the C-6 and C-8 positions of the octanoyl moiety bound to the lipoyl domains of lipoate-dependent enzymes, thereby converting the octanoylated domains into lipoylated derivatives. This Corynebacterium kroppenstedtii (strain DSM 44385 / JCM 11950 / CIP 105744 / CCUG 35717) protein is Lipoyl synthase.